The following is a 484-amino-acid chain: ATP synthase subunit beta (484 aa).

ATP is bound at residue Gly168–Thr175.

This sequence belongs to the ATPase alpha/beta chains family. F-type ATPases have 2 components, CF(1) - the catalytic core - and CF(0) - the membrane proton channel. CF(1) has five subunits: alpha(3), beta(3), gamma(1), delta(1), epsilon(1). CF(0) has three main subunits: a(1), b(2) and c(9-12). The alpha and beta chains form an alternating ring which encloses part of the gamma chain. CF(1) is attached to CF(0) by a central stalk formed by the gamma and epsilon chains, while a peripheral stalk is formed by the delta and b chains.

It is found in the cell membrane. The catalysed reaction is ATP + H2O + 4 H(+)(in) = ADP + phosphate + 5 H(+)(out). In terms of biological role, produces ATP from ADP in the presence of a proton gradient across the membrane. The catalytic sites are hosted primarily by the beta subunits. The protein is ATP synthase subunit beta of Pseudarthrobacter chlorophenolicus (strain ATCC 700700 / DSM 12829 / CIP 107037 / JCM 12360 / KCTC 9906 / NCIMB 13794 / A6) (Arthrobacter chlorophenolicus).